Here is a 276-residue protein sequence, read N- to C-terminus: Glutamate 5-kinase (276 aa).

Lys14 contributes to the ATP binding site. Ser54, Asp141, and Asn157 together coordinate substrate. ATP-binding positions include 177 to 178 and 219 to 225; these read SD and TGGMLTK.

Belongs to the glutamate 5-kinase family.

The protein localises to the cytoplasm. It catalyses the reaction L-glutamate + ATP = L-glutamyl 5-phosphate + ADP. It functions in the pathway amino-acid biosynthesis; L-proline biosynthesis; L-glutamate 5-semialdehyde from L-glutamate: step 1/2. Catalyzes the transfer of a phosphate group to glutamate to form L-glutamate 5-phosphate. The chain is Glutamate 5-kinase from Listeria monocytogenes serotype 4b (strain CLIP80459).